The sequence spans 419 residues: L-rhamnose isomerase (419 aa).

Residues histidine 262, aspartate 294, and aspartate 296 each coordinate Mn(2+).

It belongs to the rhamnose isomerase family. In terms of assembly, homotetramer. Mn(2+) serves as cofactor.

Its subcellular location is the cytoplasm. The catalysed reaction is L-rhamnopyranose = L-rhamnulose. It functions in the pathway carbohydrate degradation; L-rhamnose degradation; glycerone phosphate from L-rhamnose: step 1/3. In terms of biological role, catalyzes the interconversion of L-rhamnose and L-rhamnulose. This is L-rhamnose isomerase from Escherichia coli O81 (strain ED1a).